The chain runs to 55 residues: Large ribosomal subunit protein bL33 (55 aa).

Residues 1–11 (MAKGGREKIKL) are compositionally biased toward basic and acidic residues. The disordered stretch occupies residues 1-26 (MAKGGREKIKLESTAGTGHFYTTDKN).

Belongs to the bacterial ribosomal protein bL33 family.

The polypeptide is Large ribosomal subunit protein bL33 (Methylibium petroleiphilum (strain ATCC BAA-1232 / LMG 22953 / PM1)).